The primary structure comprises 908 residues: MIQNILRVVFGSKFERDLKKLIPIVRQINSLEESIKGMDDSTLSSQTKKFKERIVQGESLDSILPEAFATVREVSLRTMGMRHFDVQMMGGIALHGGNISEMKTGEGKTLTSTLAVYLNSLAGNGVHVVTVNDYLAKRDANWMKPIYDFLGISVGVIQHDMDHEQRKVAYAADITYGTNNEFGFDYLRDNMVSHKDHKVQRSHFFAIVDEVDSILIDEARTPLIISGPSDEATDKYVRVNKIIPKLSEGEDFEVDEKARNVLLTEKGVSHVEEILSIENLYAPENVDLVHHVHQALKAHKIFRVDKDYVVQQGQVVIIDEFTGRPMEGRRYSDGLHQAIEAKENVTIAKESQTLASITFQNYFRMYDKLAGMTGTADTEAEEFKKIYNLDVIVIPPNVSVQRKDSPDRVYRTEKEKFQAILTEIRELQSKKQPVLVGTISIEKSEVLSKMLASAGIQHNVLNAKFHQKEAEIVANAGKPGAVTIATNMAGRGTDIVLGGAQLYKENLETWKDEDEIVKQFKESILRQNLEYAESLMQKMDSGTKQKRASEILSSVKIWKKNHEEVLAAGGLHILGTERHEARRIDNQLRGRSGRQGDPGSSRFYLSLQDDLMRIFGSDRISGLMKWANMPEGQEIESKMVSNAIARAQKRVEGHNFDIRKHLLEYDDVMNRQRIVIYKMRNEVLENEDISPLISGFIEETVENQIVTHCEGNNPSAWNLESLKEWSDGLDLNLQIDEVEFKKSKNPQLSLFEKVSSTAKLKYESKAEKIGKDIWKLLERNIFLDILDHRWKEHLYSMDHLREGIWTVGYSERNPLVEYKLQGFRMFDTAIENLKNEIVNFIFRVEVSENSKLPEEKKEYKKVGQEITGGFQEFSGGNLNRSQSNGSSVTVTTSSGGGTERKTSRRRKR.

Residues Gln87, 105 to 109 (GEGKT), and Asp494 each bind ATP. The tract at residues 871–908 (QEFSGGNLNRSQSNGSSVTVTTSSGGGTERKTSRRRKR) is disordered. Residues 874-884 (SGGNLNRSQSN) show a composition bias toward polar residues.

The protein belongs to the SecA family. In terms of assembly, monomer and homodimer. Part of the essential Sec protein translocation apparatus which comprises SecA, SecYEG and auxiliary proteins SecDF. Other proteins may also be involved.

Its subcellular location is the cell inner membrane. It is found in the cytoplasm. The catalysed reaction is ATP + H2O + cellular proteinSide 1 = ADP + phosphate + cellular proteinSide 2.. Its function is as follows. Part of the Sec protein translocase complex. Interacts with the SecYEG preprotein conducting channel. Has a central role in coupling the hydrolysis of ATP to the transfer of proteins into and across the cell membrane, serving as an ATP-driven molecular motor driving the stepwise translocation of polypeptide chains across the membrane. This Leptospira interrogans serogroup Icterohaemorrhagiae serovar Lai (strain 56601) protein is Protein translocase subunit SecA.